A 389-amino-acid chain; its full sequence is Chalcone synthase 4 (389 aa).

The active site involves Cys-164.

The protein belongs to the thiolase-like superfamily. Chalcone/stilbene synthases family.

The enzyme catalyses (E)-4-coumaroyl-CoA + 3 malonyl-CoA + 3 H(+) = 2',4,4',6'-tetrahydroxychalcone + 3 CO2 + 4 CoA. The protein operates within secondary metabolite biosynthesis; flavonoid biosynthesis. Its function is as follows. The primary product of this enzyme is 4,2',4',6'-tetrahydroxychalcone (also termed naringenin-chalcone or chalcone) which can under specific conditions spontaneously isomerize into naringenin. The sequence is that of Chalcone synthase 4 (CHS4) from Medicago sativa (Alfalfa).